The primary structure comprises 300 residues: MLNHNSKVWIVNYACAIDYYLDKHKQQRGVLTPGGKGINMAIVMALFGIKPTVLTFLGQPTKDLFLQLLKPYQLDLVSFPATTQTRINVKLLDGAQTTEINDVTPLIEEQAVHEMIAYLKANVKPNDLLVLNGRFLQRDLVKLLDVAFSLTKYVVLDVDEPQLLQLLNQRQPWLMKPNRDEFVAMVNANNSNVDQQELVQLIKQFQTTQNLLMSDGAQGAYFFDQQQLLFMEAIPPQQLVSTTGAGDTLLGVFLANLLLDKDPVGSLKVAVNYASATISKLAVVNSNDQIVLKATNYYYL.

ATP contacts are provided by residues S214–G219 and G246–D247. The active-site Proton acceptor is the D247.

This sequence belongs to the carbohydrate kinase PfkB family.

The enzyme catalyses beta-D-fructose 1-phosphate + ATP = beta-D-fructose 1,6-bisphosphate + ADP + H(+). In terms of biological role, catalyzes the ATP-dependent phosphorylation of fructose-l-phosphate to fructose-l,6-bisphosphate. This is Putative 1-phosphofructokinase (fruK) from Mycoplasma pneumoniae (strain ATCC 29342 / M129 / Subtype 1) (Mycoplasmoides pneumoniae).